The following is a 601-amino-acid chain: Elongation factor 4 (601 aa).

Positions 2–184 (DLIRNFSIIA…EMIARVPPPT (183 aa)) constitute a tr-type G domain. GTP contacts are provided by residues 14 to 19 (DHGKST) and 131 to 134 (NKID).

The protein belongs to the TRAFAC class translation factor GTPase superfamily. Classic translation factor GTPase family. LepA subfamily.

It is found in the cell inner membrane. The enzyme catalyses GTP + H2O = GDP + phosphate + H(+). In terms of biological role, required for accurate and efficient protein synthesis under certain stress conditions. May act as a fidelity factor of the translation reaction, by catalyzing a one-codon backward translocation of tRNAs on improperly translocated ribosomes. Back-translocation proceeds from a post-translocation (POST) complex to a pre-translocation (PRE) complex, thus giving elongation factor G a second chance to translocate the tRNAs correctly. Binds to ribosomes in a GTP-dependent manner. The polypeptide is Elongation factor 4 (Polynucleobacter asymbioticus (strain DSM 18221 / CIP 109841 / QLW-P1DMWA-1) (Polynucleobacter necessarius subsp. asymbioticus)).